We begin with the raw amino-acid sequence, 337 residues long: Thiazole synthase (337 aa).

A disordered region spans residues 1-41 (MSQHPLRPAGSRPGDSPPDGSCPDGLAGGGSAVGGGGGGEA). Positions 10–25 (GSRPGDSPPDGSCPDG) are enriched in low complexity. A compositionally biased stretch (gly residues) spans 26–41 (LAGGGSAVGGGGGGEA). Residue lysine 144 is the Schiff-base intermediate with DXP of the active site. 1-deoxy-D-xylulose 5-phosphate contacts are provided by residues glycine 205, 231 to 232 (AG), and 253 to 254 (NT). The segment at 302–337 (FLGAHPSPASHPSPASPVPSVSRATSPAAVVGEASR) is disordered. The segment covering 319-337 (VPSVSRATSPAAVVGEASR) has biased composition (low complexity).

The protein belongs to the ThiG family. In terms of assembly, homotetramer. Forms heterodimers with either ThiH or ThiS.

Its subcellular location is the cytoplasm. The enzyme catalyses [ThiS sulfur-carrier protein]-C-terminal-Gly-aminoethanethioate + 2-iminoacetate + 1-deoxy-D-xylulose 5-phosphate = [ThiS sulfur-carrier protein]-C-terminal Gly-Gly + 2-[(2R,5Z)-2-carboxy-4-methylthiazol-5(2H)-ylidene]ethyl phosphate + 2 H2O + H(+). The protein operates within cofactor biosynthesis; thiamine diphosphate biosynthesis. Functionally, catalyzes the rearrangement of 1-deoxy-D-xylulose 5-phosphate (DXP) to produce the thiazole phosphate moiety of thiamine. Sulfur is provided by the thiocarboxylate moiety of the carrier protein ThiS. In vitro, sulfur can be provided by H(2)S. The sequence is that of Thiazole synthase from Frankia casuarinae (strain DSM 45818 / CECT 9043 / HFP020203 / CcI3).